The primary structure comprises 473 residues: Phenolic acid decarboxylase (473 aa).

Mn(2+) is bound by residues Asn-160, His-182, and Glu-224. Residues 160 to 165 and 181 to 182 contribute to the prenylated FMN site; these read NVGIYR and QH. Glu-273 (proton donor) is an active-site residue.

This sequence belongs to the UbiD family. YclC subfamily. Requires prenylated FMN as cofactor. The cofactor is Mn(2+).

The enzyme catalyses 4-hydroxybenzoate + H(+) = phenol + CO2. The catalysed reaction is vanillate + H(+) = guaiacol + CO2. Its function is as follows. Involved in the non-oxidative decarboxylation and detoxification of phenolic derivatives under both aerobic and anaerobic conditions. Phenolic acid decarboxylase that catalyzes the reversible decarboxylation of 4-hydroxybenzoate and vanillate. Could also catalyze the decarboxylation of salicylate. Is not active on di- and tri-hydroxybenzoate derivatives. This Bacillus subtilis (strain 168) protein is Phenolic acid decarboxylase.